The chain runs to 404 residues: Nicotinate phosphoribosyltransferase (404 aa).

The residue at position 225 (His225) is a Phosphohistidine; by autocatalysis.

This sequence belongs to the NAPRTase family. Post-translationally, transiently phosphorylated on a His residue during the reaction cycle. Phosphorylation strongly increases the affinity for substrates and increases the rate of nicotinate D-ribonucleotide production. Dephosphorylation regenerates the low-affinity form of the enzyme, leading to product release.

The enzyme catalyses nicotinate + 5-phospho-alpha-D-ribose 1-diphosphate + ATP + H2O = nicotinate beta-D-ribonucleotide + ADP + phosphate + diphosphate. It participates in cofactor biosynthesis; NAD(+) biosynthesis; nicotinate D-ribonucleotide from nicotinate: step 1/1. In terms of biological role, catalyzes the synthesis of beta-nicotinate D-ribonucleotide from nicotinate and 5-phospho-D-ribose 1-phosphate at the expense of ATP. This is Nicotinate phosphoribosyltransferase from Acinetobacter baumannii (strain ATCC 17978 / DSM 105126 / CIP 53.77 / LMG 1025 / NCDC KC755 / 5377).